A 574-amino-acid chain; its full sequence is 4-oxocyclohexanecarboxylate 2-dehydrogenase (574 aa).

This sequence belongs to the FAD-dependent oxidoreductase 2 family. Monomer. Homodimer. FAD serves as cofactor.

It carries out the reaction 4-oxocyclohexane-1-carboxylate + O2 = 4-oxocyclohex-2-ene-1-carboxylate + H2O2. Inhibited by 5,5'-dithio-bis(2- nitrobenzoate) and N-bromosuccinimide, but not by thiol and chelating reagents. In terms of biological role, desaturase involved in a cyclohexanecarboxylate (CHCA) degradation pathway. Catalyzes the conversion of 4-oxocyclohexanecarboxylate (4-oxoCHCA) to 4-oxocyclohexenecarboxylate. Is highly specific for 4-oxocyclohexanecarboxylic acid and shows only slight activity with 4-oxo-2-methylcyclohex-2-enecarboxylic acid. The sequence is that of 4-oxocyclohexanecarboxylate 2-dehydrogenase from Sinomonas cyclohexanicum (Corynebacterium cyclohexanicum).